A 201-amino-acid chain; its full sequence is 3-isopropylmalate dehydratase small subunit (201 aa).

This sequence belongs to the LeuD family. LeuD type 1 subfamily. As to quaternary structure, heterodimer of LeuC and LeuD.

The catalysed reaction is (2R,3S)-3-isopropylmalate = (2S)-2-isopropylmalate. It functions in the pathway amino-acid biosynthesis; L-leucine biosynthesis; L-leucine from 3-methyl-2-oxobutanoate: step 2/4. Functionally, catalyzes the isomerization between 2-isopropylmalate and 3-isopropylmalate, via the formation of 2-isopropylmaleate. This chain is 3-isopropylmalate dehydratase small subunit, found in Salmonella arizonae (strain ATCC BAA-731 / CDC346-86 / RSK2980).